Here is a 365-residue protein sequence, read N- to C-terminus: tRNA/tmRNA (uracil-C(5))-methyltransferase (365 aa).

S-adenosyl-L-methionine-binding residues include Q188, Y216, N221, E237, and D297. Residue C322 is the Nucleophile of the active site. E356 acts as the Proton acceptor in catalysis.

The protein belongs to the class I-like SAM-binding methyltransferase superfamily. RNA M5U methyltransferase family. TrmA subfamily.

The enzyme catalyses uridine(54) in tRNA + S-adenosyl-L-methionine = 5-methyluridine(54) in tRNA + S-adenosyl-L-homocysteine + H(+). It catalyses the reaction uridine(341) in tmRNA + S-adenosyl-L-methionine = 5-methyluridine(341) in tmRNA + S-adenosyl-L-homocysteine + H(+). Functionally, dual-specificity methyltransferase that catalyzes the formation of 5-methyluridine at position 54 (m5U54) in all tRNAs, and that of position 341 (m5U341) in tmRNA (transfer-mRNA). The sequence is that of tRNA/tmRNA (uracil-C(5))-methyltransferase from Aggregatibacter aphrophilus (strain NJ8700) (Haemophilus aphrophilus).